The chain runs to 63 residues: Large ribosomal subunit protein bL32 (63 aa).

The tract at residues 1-20 (MANPKAKMSKSRRDKRRAQF) is disordered. Basic residues predominate over residues 7–18 (KMSKSRRDKRRA).

This sequence belongs to the bacterial ribosomal protein bL32 family.

The sequence is that of Large ribosomal subunit protein bL32 from Chlorobaculum parvum (strain DSM 263 / NCIMB 8327) (Chlorobium vibrioforme subsp. thiosulfatophilum).